Reading from the N-terminus, the 314-residue chain is tRNA dimethylallyltransferase 1 (314 aa).

Residue 8-15 (GPTGSGKS) participates in ATP binding. 10–15 (TGSGKS) provides a ligand contact to substrate.

This sequence belongs to the IPP transferase family. As to quaternary structure, monomer. It depends on Mg(2+) as a cofactor.

It catalyses the reaction adenosine(37) in tRNA + dimethylallyl diphosphate = N(6)-dimethylallyladenosine(37) in tRNA + diphosphate. In terms of biological role, catalyzes the transfer of a dimethylallyl group onto the adenine at position 37 in tRNAs that read codons beginning with uridine, leading to the formation of N6-(dimethylallyl)adenosine (i(6)A). This chain is tRNA dimethylallyltransferase 1, found in Mycobacterium ulcerans (strain Agy99).